Consider the following 461-residue polypeptide: Ornithine decarboxylase (461 aa).

Lys69 is subject to N6-(pyridoxal phosphate)lysine. Pyridoxal 5'-phosphate-binding positions include Ser200, Gly237, and 274 to 277; that span reads EPGR. Residue Ser303 is modified to Phosphoserine; by CK2. A substrate-binding site is contributed by 331-332; the sequence is YD. Cys360 (proton donor; shared with dimeric partner) is an active-site residue. Cys360 carries the post-translational modification S-nitrosocysteine. A substrate-binding site is contributed by Asp361. Pyridoxal 5'-phosphate is bound at residue Tyr389.

It belongs to the Orn/Lys/Arg decarboxylase class-II family. As to quaternary structure, homodimer. Only the dimer is catalytically active, as the active sites are constructed of residues from both monomers. Pyridoxal 5'-phosphate serves as cofactor.

It carries out the reaction L-ornithine + H(+) = putrescine + CO2. It functions in the pathway amine and polyamine biosynthesis; putrescine biosynthesis via L-ornithine pathway; putrescine from L-ornithine: step 1/1. Inhibited by antizymes (AZs) OAZ1, OAZ2 and OAZ3 in response to polyamine levels. AZs inhibit the assembly of the functional homodimer by binding to ODC monomers. Additionally, OAZ1 targets ODC monomers for ubiquitin-independent proteolytic destruction by the 26S proteasome. Catalyzes the first and rate-limiting step of polyamine biosynthesis that converts ornithine into putrescine, which is the precursor for the polyamines, spermidine and spermine. Polyamines are essential for cell proliferation and are implicated in cellular processes, ranging from DNA replication to apoptosis. The chain is Ornithine decarboxylase (Odc1) from Rattus norvegicus (Rat).